We begin with the raw amino-acid sequence, 302 residues long: N-acetylmuramic acid 6-phosphate etherase (302 aa).

The SIS domain maps to 58 to 221; sequence IGKAFLNGGR…STGAMVKTGK (164 aa). Residue E86 is the Proton donor of the active site. E117 is an active-site residue.

The protein belongs to the GCKR-like family. MurNAc-6-P etherase subfamily. Homodimer.

The enzyme catalyses N-acetyl-D-muramate 6-phosphate + H2O = N-acetyl-D-glucosamine 6-phosphate + (R)-lactate. It participates in amino-sugar metabolism; N-acetylmuramate degradation. Its function is as follows. Specifically catalyzes the cleavage of the D-lactyl ether substituent of MurNAc 6-phosphate, producing GlcNAc 6-phosphate and D-lactate. The chain is N-acetylmuramic acid 6-phosphate etherase from Clostridium botulinum (strain Loch Maree / Type A3).